A 461-amino-acid polypeptide reads, in one-letter code: Phosphoglucosamine mutase (461 aa).

Catalysis depends on S107, which acts as the Phosphoserine intermediate. Positions 107, 254, 256, and 258 each coordinate Mg(2+). S107 bears the Phosphoserine mark.

This sequence belongs to the phosphohexose mutase family. Requires Mg(2+) as cofactor. Post-translationally, activated by phosphorylation.

It carries out the reaction alpha-D-glucosamine 1-phosphate = D-glucosamine 6-phosphate. In terms of biological role, catalyzes the conversion of glucosamine-6-phosphate to glucosamine-1-phosphate. This chain is Phosphoglucosamine mutase, found in Bifidobacterium longum subsp. infantis (strain ATCC 15697 / DSM 20088 / JCM 1222 / NCTC 11817 / S12).